The chain runs to 105 residues: Integration host factor subunit alpha (105 aa).

The protein belongs to the bacterial histone-like protein family. In terms of assembly, heterodimer of an alpha and a beta chain.

Its function is as follows. This protein is one of the two subunits of integration host factor, a specific DNA-binding protein that functions in genetic recombination as well as in transcriptional and translational control. This chain is Integration host factor subunit alpha, found in Azorhizobium caulinodans (strain ATCC 43989 / DSM 5975 / JCM 20966 / LMG 6465 / NBRC 14845 / NCIMB 13405 / ORS 571).